We begin with the raw amino-acid sequence, 332 residues long: 3-ketodihydrosphingosine reductase (332 aa).

Positions 1 to 25 (MLLLAAASLVAFVLLLYMVSPLISP) are cleaved as a signal peptide. The Cytoplasmic portion of the chain corresponds to 26–269 (KPLALPGAHV…QGNFNSSIGS (244 aa)). Gly-39, Ser-41, Ser-42, Gly-43, Arg-64, Lys-68, and Asp-93 together coordinate NADPH. The short motif at 39 to 43 (GGSSG) is the GXSXG element. Ser-172 acts as the Proton donor in catalysis. Tyr-186 acts as the Proton acceptor in catalysis. Residues Tyr-186 and Lys-190 each contribute to the NADP(+) site. Lys-190 functions as the Lowers pKa of active site Tyr in the catalytic mechanism. A helical transmembrane segment spans residues 270–290 (DGYMLSSLTCGMAPVTSIMEG). Residues 291 to 292 (LQ) are Lumenal-facing. The chain crosses the membrane as a helical span at residues 293–313 (QVVTMGLFRTIALFYLGSFDS). Residues 314–331 (IVRRCMMQKAKLETVDKT) are Cytoplasmic-facing.

Belongs to the short-chain dehydrogenases/reductases (SDR) family.

The protein resides in the endoplasmic reticulum membrane. The enzyme catalyses sphinganine + NADP(+) = 3-oxosphinganine + NADPH + H(+). It participates in lipid metabolism; sphingolipid metabolism. In terms of biological role, catalyzes the reduction of 3'-oxosphinganine (3-ketodihydrosphingosine/KDS) to sphinganine (dihydrosphingosine/DHS), the second step of de novo sphingolipid biosynthesis. This is 3-ketodihydrosphingosine reductase (KDSR) from Bos taurus (Bovine).